We begin with the raw amino-acid sequence, 379 residues long: Heterogeneous nuclear ribonucleoprotein A3 (379 aa).

An N-acetylmethionine modification is found at M1. Positions 1 to 10 (MEVKPPPGRP) are enriched in pro residues. The segment at 1-34 (MEVKPPPGRPQPDSGRRRRRRGEEGHDPKEPEQL) is disordered. A Glycyl lysine isopeptide (Lys-Gly) (interchain with G-Cter in SUMO2) cross-link involves residue K4. At S14 the chain carries Phosphoserine. Residues 21–34 (RGEEGHDPKEPEQL) are compositionally biased toward basic and acidic residues. Positions 35–118 (RKLFIGGLSF…RAVSREDSVK (84 aa)) constitute an RRM 1 domain. K36 is covalently cross-linked (Glycyl lysine isopeptide (Lys-Gly) (interchain with G-Cter in SUMO2)). Position 43 is a phosphoserine (S43). The residue at position 52 (R52) is a Dimethylated arginine; alternate. Omega-N-methylarginine; alternate is present on R52. R76 carries the post-translational modification Omega-N-methylarginine. Phosphoserine is present on residues S112 and S116. A Glycyl lysine isopeptide (Lys-Gly) (interchain with G-Cter in SUMO2) cross-link involves residue K118. Position 124 is a phosphothreonine (T124). The region spanning 126 to 205 (KKIFVGGIKE…CEVKKALSKQ (80 aa)) is the RRM 2 domain. K134 carries the N6-acetyllysine; alternate modification. K134 participates in a covalent cross-link: Glycyl lysine isopeptide (Lys-Gly) (interchain with G-Cter in SUMO2); alternate. Residues K151 and K182 each participate in a glycyl lysine isopeptide (Lys-Gly) (interchain with G-Cter in SUMO2) cross-link. The disordered stretch occupies residues 204 to 225 (KQEMQSAGSQRGRGGGSGNFMG). 5 positions are modified to omega-N-methylarginine; alternate: R214, R216, R226, R239, and R246. R214, R216, R226, R239, and R246 each carry asymmetric dimethylarginine; alternate. A compositionally biased stretch (gly residues) spans 214–225 (RGRGGGSGNFMG). Residue R257 is modified to Omega-N-methylarginine. R286 carries the post-translational modification Asymmetric dimethylarginine. Residues 335–379 (NYSGQQQSNYGPMKGGSFGGRSSGSPYGGGYGSGGGSGGYGSRRF) form a disordered region. The span at 347–379 (MKGGSFGGRSSGSPYGGGYGSGGGSGGYGSRRF) shows a compositional bias: gly residues. At S351 the chain carries Phosphoserine. At R355 the chain carries Omega-N-methylarginine. S359 carries the phosphoserine modification. Residues Y361 and Y365 each carry the phosphotyrosine modification. S367 and S371 each carry phosphoserine. Y374 carries the phosphotyrosine modification. Residue S376 is modified to Phosphoserine.

As to quaternary structure, identified in the spliceosome C complex.

The protein localises to the nucleus. In terms of biological role, plays a role in cytoplasmic trafficking of RNA. Binds to the cis-acting response element, A2RE. May be involved in pre-mRNA splicing. The polypeptide is Heterogeneous nuclear ribonucleoprotein A3 (Hnrnpa3) (Mus musculus (Mouse)).